The following is a 445-amino-acid chain: Histidinol dehydrogenase (445 aa).

The NAD(+) site is built by tyrosine 144, glutamine 205, and asparagine 228. Serine 251, glutamine 273, and histidine 276 together coordinate substrate. Residues glutamine 273 and histidine 276 each coordinate Zn(2+). Residues glutamate 341 and histidine 342 each act as proton acceptor in the active site. Substrate contacts are provided by histidine 342, aspartate 375, glutamate 429, and histidine 434. Residue aspartate 375 participates in Zn(2+) binding. Histidine 434 contributes to the Zn(2+) binding site.

This sequence belongs to the histidinol dehydrogenase family. Zn(2+) serves as cofactor.

The enzyme catalyses L-histidinol + 2 NAD(+) + H2O = L-histidine + 2 NADH + 3 H(+). Its pathway is amino-acid biosynthesis; L-histidine biosynthesis; L-histidine from 5-phospho-alpha-D-ribose 1-diphosphate: step 9/9. In terms of biological role, catalyzes the sequential NAD-dependent oxidations of L-histidinol to L-histidinaldehyde and then to L-histidine. The polypeptide is Histidinol dehydrogenase (Cupriavidus pinatubonensis (strain JMP 134 / LMG 1197) (Cupriavidus necator (strain JMP 134))).